We begin with the raw amino-acid sequence, 129 residues long: Intraflagellar transport protein 20 homolog (129 aa).

Positions 89–121 (VLLQMTIRELTVEKERLRVELEAVRKIEKEQDE) form a coiled coil.

Component of the IFT complex B composed of at least che-2, che-13, dyf-1, dyf-3, dyf-6, dyf-11, dyf-13, ift-20, ift-74, ift-81, ifta-2, osm-1, osm-5 and osm-6.

The protein localises to the cell projection. The protein resides in the cilium. Functionally, component of the intraflagellar transport (IFT) complex B required for transport of proteins in the motile cilium. Required for ciliary entrance and transport of specific ciliary cargo proteins such as che-3 which are related to motility. The protein is Intraflagellar transport protein 20 homolog of Caenorhabditis elegans.